Consider the following 291-residue polypeptide: Beta-lactamase CTX-M-97 (291 aa).

The first 28 residues, 1–28, serve as a signal peptide directing secretion; the sequence is MMTQSIGRSMLTVMATLPLLFSSATLHA. The active-site Acyl-ester intermediate is serine 73. 237 to 239 serves as a coordination point for substrate; that stretch reads KTG.

This sequence belongs to the class-A beta-lactamase family.

It catalyses the reaction a beta-lactam + H2O = a substituted beta-amino acid. Is probably capable of hydrolyzing cephalosporins such as ceftriaxone and ceftazidime, thus conferring resistance to these antibiotics. The sequence is that of Beta-lactamase CTX-M-97 (bla) from Escherichia coli.